Consider the following 308-residue polypeptide: Ribosomal RNA small subunit methyltransferase H (308 aa).

S-adenosyl-L-methionine-binding positions include 33–35, D52, F78, D99, and Q106; that span reads GGH. The tract at residues 289–308 is disordered; it reads EEIETNSRSRSAKLRVAEKL.

The protein belongs to the methyltransferase superfamily. RsmH family.

The protein localises to the cytoplasm. The catalysed reaction is cytidine(1402) in 16S rRNA + S-adenosyl-L-methionine = N(4)-methylcytidine(1402) in 16S rRNA + S-adenosyl-L-homocysteine + H(+). Its function is as follows. Specifically methylates the N4 position of cytidine in position 1402 (C1402) of 16S rRNA. In Thermoanaerobacter sp. (strain X514), this protein is Ribosomal RNA small subunit methyltransferase H.